A 316-amino-acid polypeptide reads, in one-letter code: Protoheme IX farnesyltransferase (316 aa).

9 helical membrane passes run 28-48, 57-77, 106-126, 129-149, 156-176, 179-199, 230-250, 254-274, and 296-316; these read WLALLKPRVISLVVFTGAAGM, IPIGLITILCICIGAGAAGAI, AALVYGVVLSVLSVIVLWLAT, LAADILAFSIFFYSVIYTMWL, NIVIGGAAGAFPPMIGWAATM, MAVLPVAMFAIVFLWTPPHFW, ILIYTFILTAVSLVPSFVHEV, YTVVTSLLDLGFILCAFRVLM, and YSLVYLFLLFCGLLVDRVLIG.

The protein belongs to the UbiA prenyltransferase family. Protoheme IX farnesyltransferase subfamily.

The protein resides in the cell inner membrane. It catalyses the reaction heme b + (2E,6E)-farnesyl diphosphate + H2O = Fe(II)-heme o + diphosphate. It functions in the pathway porphyrin-containing compound metabolism; heme O biosynthesis; heme O from protoheme: step 1/1. Its function is as follows. Converts heme B (protoheme IX) to heme O by substitution of the vinyl group on carbon 2 of heme B porphyrin ring with a hydroxyethyl farnesyl side group. This chain is Protoheme IX farnesyltransferase, found in Gluconobacter oxydans (strain 621H) (Gluconobacter suboxydans).